A 268-amino-acid chain; its full sequence is Elongation factor Ts (268 aa).

Residues 81 to 84 form an involved in Mg(2+) ion dislocation from EF-Tu region; it reads TDFV.

Belongs to the EF-Ts family.

It is found in the cytoplasm. Associates with the EF-Tu.GDP complex and induces the exchange of GDP to GTP. It remains bound to the aminoacyl-tRNA.EF-Tu.GTP complex up to the GTP hydrolysis stage on the ribosome. In Buchnera aphidicola subsp. Acyrthosiphon pisum (strain 5A), this protein is Elongation factor Ts.